A 357-amino-acid chain; its full sequence is tRNA N6-adenosine threonylcarbamoyltransferase (357 aa).

Residues H120 and H124 each contribute to the Fe cation site. Substrate contacts are provided by residues 143–147, D176, G189, and N289; that span reads LVSGG. D317 provides a ligand contact to Fe cation.

This sequence belongs to the KAE1 / TsaD family. Requires Fe(2+) as cofactor.

The protein resides in the cytoplasm. The enzyme catalyses L-threonylcarbamoyladenylate + adenosine(37) in tRNA = N(6)-L-threonylcarbamoyladenosine(37) in tRNA + AMP + H(+). In terms of biological role, required for the formation of a threonylcarbamoyl group on adenosine at position 37 (t(6)A37) in tRNAs that read codons beginning with adenine. Is involved in the transfer of the threonylcarbamoyl moiety of threonylcarbamoyl-AMP (TC-AMP) to the N6 group of A37, together with TsaE and TsaB. TsaD likely plays a direct catalytic role in this reaction. The polypeptide is tRNA N6-adenosine threonylcarbamoyltransferase (Polynucleobacter necessarius subsp. necessarius (strain STIR1)).